The primary structure comprises 258 residues: Isoprenyl transferase (258 aa).

The active site involves aspartate 38. Aspartate 38 contributes to the Mg(2+) binding site. Substrate is bound by residues 39 to 42 (GNGR), tryptophan 43, arginine 51, histidine 55, and 83 to 85 (STE). Asparagine 86 (proton acceptor) is an active-site residue. Substrate-binding positions include tryptophan 87, arginine 89, arginine 206, and 212 to 214 (RIS). Residue glutamate 225 coordinates Mg(2+).

Belongs to the UPP synthase family. As to quaternary structure, homodimer. It depends on Mg(2+) as a cofactor.

Functionally, catalyzes the condensation of isopentenyl diphosphate (IPP) with allylic pyrophosphates generating different type of terpenoids. The protein is Isoprenyl transferase of Bacillus thuringiensis subsp. konkukian (strain 97-27).